Reading from the N-terminus, the 56-residue chain is uncharacterized protein (56 aa).

Transmembrane regions (helical) follow at residues 5-23 (VLIF…YWIY) and 33-55 (ITAG…ILGW).

It is found in the cell membrane. This is an uncharacterized protein from Archaeoglobus fulgidus (strain ATCC 49558 / DSM 4304 / JCM 9628 / NBRC 100126 / VC-16).